We begin with the raw amino-acid sequence, 83 residues long: MKTLLLTLVVVTIVCLDLGYTRRCFNQQSSEPQTNKSCPPGENSCYRKQWRDHRGTIIERGCGCPTVKPGIKLRCCESEDCNN.

A signal peptide spans 1 to 21; the sequence is MKTLLLTLVVVTIVCLDLGYT. Intrachain disulfides connect Cys24-Cys45, Cys38-Cys62, Cys64-Cys75, and Cys76-Cys81.

Belongs to the three-finger toxin family. Short-chain subfamily. Type I alpha-neurotoxin sub-subfamily. As to expression, expressed by the venom gland.

The protein localises to the secreted. Binds to muscle nicotinic acetylcholine receptor (nAChR) and inhibit acetylcholine from binding to the receptor, thereby impairing neuromuscular transmission. The polypeptide is Short neurotoxin OKI-Ed (Laticauda semifasciata (Black-banded sea krait)).